Here is a 726-residue protein sequence, read N- to C-terminus: Probable cyclic nucleotide-gated ion channel 14 (726 aa).

The Cytoplasmic portion of the chain corresponds to 1 to 86 (MEFKRDNTVR…GDAVLQWNRV (86 aa)). A helical membrane pass occupies residues 87–107 (FLFWCLVALYVDPLFFFLSSV). Residues 108–122 (KRIGRSSCMTTDLKL) are Extracellular-facing. Residues 123–143 (GIVITFFRTLADLFYVLHIVI) traverse the membrane as a helical segment. Topologically, residues 144–177 (KFRTAYVSRTSRVFGRGELVKDPKLIARRYLRSD) are cytoplasmic. The helical transmembrane segment at 178–198 (FIVDLIACLPLPQIVSWFILP) threads the bilayer. The Extracellular portion of the chain corresponds to 199–211 (SIRSSHSDHTTNA). The chain crosses the membrane as a helical span at residues 212-232 (LVLIVLVQYIPRLYLIFPLSA). The Cytoplasmic portion of the chain corresponds to 233-252 (EIIKATGVVTTTAWAGAAYN). Residues 253 to 273 (LLQYMLASHILGSAWYLLSIE) form a helical membrane-spanning segment. Topologically, residues 274–377 (RQATCWKAEC…LSTSTSVLET (104 aa)) are extracellular. A helical transmembrane segment spans residues 378-398 (MFAILVAIFGLVLFALLIGNM). Topologically, residues 399 to 726 (QTYLQSITVR…PDEPDFSVDD (328 aa)) are cytoplasmic. Residues 481–605 (LFAQ…SKKL) and E552 contribute to the a nucleoside 3',5'-cyclic phosphate site. The interval 597–612 (FRRLHSKKLQHTFRYY) is calmodulin-binding. Residues 617–646 (RTWAACFVQVAWRRYKRKKLAKSLSLAESF) form the IQ domain. Residues 707–726 (KDVEIPMLPKPDEPDFSVDD) are disordered.

The protein belongs to the cyclic nucleotide-gated cation channel (TC 1.A.1.5) family. As to quaternary structure, homotetramer or heterotetramer.

The protein localises to the cell membrane. Probable cyclic nucleotide-gated ion channel. This is Probable cyclic nucleotide-gated ion channel 14 (CNGC14) from Arabidopsis thaliana (Mouse-ear cress).